The primary structure comprises 428 residues: Histidine--tRNA ligase (428 aa).

It belongs to the class-II aminoacyl-tRNA synthetase family.

Its subcellular location is the cytoplasm. The catalysed reaction is tRNA(His) + L-histidine + ATP = L-histidyl-tRNA(His) + AMP + diphosphate + H(+). This is Histidine--tRNA ligase from Korarchaeum cryptofilum (strain OPF8).